The primary structure comprises 480 residues: UDP-N-acetylmuramate--L-alanine ligase (480 aa).

115-121 (GTHGKTT) serves as a coordination point for ATP.

This sequence belongs to the MurCDEF family.

It localises to the cytoplasm. The enzyme catalyses UDP-N-acetyl-alpha-D-muramate + L-alanine + ATP = UDP-N-acetyl-alpha-D-muramoyl-L-alanine + ADP + phosphate + H(+). Its pathway is cell wall biogenesis; peptidoglycan biosynthesis. Functionally, cell wall formation. The chain is UDP-N-acetylmuramate--L-alanine ligase from Gluconacetobacter diazotrophicus (strain ATCC 49037 / DSM 5601 / CCUG 37298 / CIP 103539 / LMG 7603 / PAl5).